Consider the following 226-residue polypeptide: Probable proteasome subunit beta type-7 (226 aa).

The protein belongs to the peptidase T1B family. The 26S proteasome consists of a 20S proteasome core and two 19S regulatory subunits. The 20S proteasome core is composed of 28 subunits that are arranged in four stacked rings, resulting in a barrel-shaped structure. The two end rings are each formed by seven alpha subunits, and the two central rings are each formed by seven beta subunits. The catalytic chamber with the active sites is on the inside of the barrel.

Its subcellular location is the cytoplasm. It localises to the nucleus. Its function is as follows. Non-catalytic component of the proteasome which degrades poly-ubiquitinated proteins in the cytoplasm and in the nucleus. It is essential for the regulated turnover of proteins and for the removal of misfolded proteins. The proteasome is a multicatalytic proteinase complex that is characterized by its ability to cleave peptides with Arg, Phe, Tyr, Leu, and Glu adjacent to the leaving group at neutral or slightly basic pH. It has an ATP-dependent proteolytic activity. The protein is Probable proteasome subunit beta type-7 (PRE4) of Encephalitozoon cuniculi (strain GB-M1) (Microsporidian parasite).